We begin with the raw amino-acid sequence, 512 residues long: Sporulation-regulated protein 3 (512 aa).

The disordered stretch occupies residues 31-68 (RQSSQGQYAVDSHPPKSPELKHRRQRSSSFVNGKCRNR). A Septin-type G domain is found at 106–365 (NGIDFTLMVA…EKCRSEMLRT (260 aa)). Residues 116-123 (GQSGLGKT) form a G1 motif region. GTP contacts are provided by residues 116-123 (GQSGLGKT), Gly168, 247-255 (KSDLLTKEE), and Arg315. Residues 165-168 (DTPG) are G3 motif. The segment at 246 to 249 (AKSD) is G4 motif. 2 coiled-coil regions span residues 376-406 (TKSVDITEEQRKFLEEEMNFDEIEENKLKNY) and 451-496 (RDWK…KSSN).

Belongs to the TRAFAC class TrmE-Era-EngA-EngB-Septin-like GTPase superfamily. Septin GTPase family. As to quaternary structure, interacts with other septin proteins such as SPR28 to form a ring at the bud neck.

Its subcellular location is the prospore membrane. The protein resides in the bud neck. Its function is as follows. Septins are GTPases involved in cytokinesis that assemble into filaments and form a ring at the cleavage site. May act by recruiting MYO1 and HOF1, a protein involved in septation, to the site of cleavage. Septins are also involved in cell morphogenesis, bud site selection, chitin deposition, cell cycle regulation, cell compartmentalization and spore wall formation. The polypeptide is Sporulation-regulated protein 3 (SPR3) (Saccharomyces cerevisiae (strain ATCC 204508 / S288c) (Baker's yeast)).